We begin with the raw amino-acid sequence, 371 residues long: Queuine tRNA-ribosyltransferase (371 aa).

Aspartate 90 acts as the Proton acceptor in catalysis. Residues 90–94, aspartate 144, glutamine 188, and glycine 215 each bind substrate; that span reads DSGGF. Positions 246-252 are RNA binding; it reads GVGTPED. Aspartate 265 serves as the catalytic Nucleophile. An RNA binding; important for wobble base 34 recognition region spans residues 270–274; it reads TRNAR. Residues cysteine 303, cysteine 305, cysteine 308, and histidine 334 each contribute to the Zn(2+) site.

It belongs to the queuine tRNA-ribosyltransferase family. In terms of assembly, homodimer. Within each dimer, one monomer is responsible for RNA recognition and catalysis, while the other monomer binds to the replacement base PreQ1. Requires Zn(2+) as cofactor.

The enzyme catalyses 7-aminomethyl-7-carbaguanine + guanosine(34) in tRNA = 7-aminomethyl-7-carbaguanosine(34) in tRNA + guanine. It functions in the pathway tRNA modification; tRNA-queuosine biosynthesis. Catalyzes the base-exchange of a guanine (G) residue with the queuine precursor 7-aminomethyl-7-deazaguanine (PreQ1) at position 34 (anticodon wobble position) in tRNAs with GU(N) anticodons (tRNA-Asp, -Asn, -His and -Tyr). Catalysis occurs through a double-displacement mechanism. The nucleophile active site attacks the C1' of nucleotide 34 to detach the guanine base from the RNA, forming a covalent enzyme-RNA intermediate. The proton acceptor active site deprotonates the incoming PreQ1, allowing a nucleophilic attack on the C1' of the ribose to form the product. After dissociation, two additional enzymatic reactions on the tRNA convert PreQ1 to queuine (Q), resulting in the hypermodified nucleoside queuosine (7-(((4,5-cis-dihydroxy-2-cyclopenten-1-yl)amino)methyl)-7-deazaguanosine). The chain is Queuine tRNA-ribosyltransferase from Neisseria meningitidis serogroup C / serotype 2a (strain ATCC 700532 / DSM 15464 / FAM18).